The primary structure comprises 180 residues: UPF0227 protein YcfP (180 aa).

The protein belongs to the UPF0227 family.

In Salmonella agona (strain SL483), this protein is UPF0227 protein YcfP.